The primary structure comprises 87 residues: Small ribosomal subunit protein bS20 (87 aa).

Basic residues predominate over residues 1–11; that stretch reads MANIKSAKKRA. The interval 1–27 is disordered; sequence MANIKSAKKRAVQSEKRRQHNASQRSM.

This sequence belongs to the bacterial ribosomal protein bS20 family.

Its function is as follows. Binds directly to 16S ribosomal RNA. In Histophilus somni (strain 129Pt) (Haemophilus somnus), this protein is Small ribosomal subunit protein bS20.